Consider the following 711-residue polypeptide: Polyribonucleotide nucleotidyltransferase (711 aa).

Positions 487 and 493 each coordinate Mg(2+). The KH domain maps to Pro-554–Ile-613. The region spanning Gly-623 to Lys-691 is the S1 motif domain. Positions Lys-691–Glu-711 are disordered.

This sequence belongs to the polyribonucleotide nucleotidyltransferase family. In terms of assembly, component of the RNA degradosome, which is a multiprotein complex involved in RNA processing and mRNA degradation. It depends on Mg(2+) as a cofactor.

Its subcellular location is the cytoplasm. The enzyme catalyses RNA(n+1) + phosphate = RNA(n) + a ribonucleoside 5'-diphosphate. Its function is as follows. Involved in mRNA degradation. Catalyzes the phosphorolysis of single-stranded polyribonucleotides processively in the 3'- to 5'-direction. The polypeptide is Polyribonucleotide nucleotidyltransferase (Vibrio parahaemolyticus serotype O3:K6 (strain RIMD 2210633)).